The following is a 176-amino-acid chain: Inorganic pyrophosphatase (176 aa).

Substrate is bound by residues K30, R44, and Y56. 3 residues coordinate Mg(2+): D66, D71, and D103. Y142 contributes to the substrate binding site.

It belongs to the PPase family. Homohexamer. Mg(2+) serves as cofactor.

The protein localises to the cytoplasm. The enzyme catalyses diphosphate + H2O = 2 phosphate + H(+). Catalyzes the hydrolysis of inorganic pyrophosphate (PPi) forming two phosphate ions. This Vibrio vulnificus (strain CMCP6) protein is Inorganic pyrophosphatase.